Consider the following 276-residue polypeptide: Large ribosomal subunit protein uL2 (276 aa).

Disordered regions lie at residues 33 to 55 (LVEA…RHIG) and 221 to 276 (RGTA…AKKK).

The protein belongs to the universal ribosomal protein uL2 family. Part of the 50S ribosomal subunit. Forms a bridge to the 30S subunit in the 70S ribosome.

In terms of biological role, one of the primary rRNA binding proteins. Required for association of the 30S and 50S subunits to form the 70S ribosome, for tRNA binding and peptide bond formation. It has been suggested to have peptidyltransferase activity; this is somewhat controversial. Makes several contacts with the 16S rRNA in the 70S ribosome. The chain is Large ribosomal subunit protein uL2 from Psychrobacter sp. (strain PRwf-1).